Reading from the N-terminus, the 487-residue chain is Homoserine O-acetyltransferase (487 aa).

Positions 45–352 (NVILVCHPLT…PHGHDGFLLE (308 aa)) constitute an AB hydrolase-1 domain. S150 acts as the Nucleophile in catalysis. R219 contributes to the substrate binding site. Residues D313 and H346 contribute to the active site. Position 347 (D347) interacts with substrate. 2 CBS domains span residues 373–430 (MTNN…FQDL) and 434–487 (MTKD…EVLQ).

The protein belongs to the AB hydrolase superfamily. MetX family. In terms of assembly, homodimer.

It localises to the cytoplasm. It catalyses the reaction L-homoserine + acetyl-CoA = O-acetyl-L-homoserine + CoA. It functions in the pathway amino-acid biosynthesis; L-methionine biosynthesis via de novo pathway; O-acetyl-L-homoserine from L-homoserine: step 1/1. Functionally, transfers an acetyl group from acetyl-CoA to L-homoserine, forming acetyl-L-homoserine. The chain is Homoserine O-acetyltransferase from Methanocorpusculum labreanum (strain ATCC 43576 / DSM 4855 / Z).